The chain runs to 1127 residues: Elongation factor-like GTPase 1 (1127 aa).

In terms of domain architecture, tr-type G spans 17–272 (ANIRNICVLA…LLKTLWGDYY (256 aa)). Residues 26-33 (AHVDHGKT), 92-96 (DSPGH), and 146-149 (NKID) contribute to the GTP site. A disordered region spans residues 429-496 (KPRPLTQEEM…VASVSRQPVS (68 aa)). Basic and acidic residues-rich tracts occupy residues 438-452 (MAQR…HAEK) and 474-484 (SPHEDEPRGDE). Lys528 carries the N6-acetyllysine modification.

The protein belongs to the TRAFAC class translation factor GTPase superfamily. Classic translation factor GTPase family. As to quaternary structure, associates with the 60S ribosomal subunit. Found in a complex consisting of the 60S ribosomal subunit, SBDS and EFL1.

It carries out the reaction GTP + H2O = GDP + phosphate + H(+). Its activity is regulated as follows. GTPase activity is stimulated in the presence of 60S ribosome subunits. In terms of biological role, GTPase involved in the biogenesis of the 60S ribosomal subunit and translational activation of ribosomes. Together with SBDS, triggers the GTP-dependent release of EIF6 from 60S pre-ribosomes in the cytoplasm, thereby activating ribosomes for translation competence by allowing 80S ribosome assembly and facilitating EIF6 recycling to the nucleus, where it is required for 60S rRNA processing and nuclear export. In Mus musculus (Mouse), this protein is Elongation factor-like GTPase 1 (Efl1).